The sequence spans 107 residues: Integration host factor subunit beta (107 aa).

Residues 76–107 (FVPHFKPGKELRERVDGRAGEPLKADDPDDER) form a disordered region. Over residues 82–101 (PGKELRERVDGRAGEPLKAD) the composition is skewed to basic and acidic residues.

It belongs to the bacterial histone-like protein family. In terms of assembly, heterodimer of an alpha and a beta chain.

Functionally, this protein is one of the two subunits of integration host factor, a specific DNA-binding protein that functions in genetic recombination as well as in transcriptional and translational control. This is Integration host factor subunit beta from Burkholderia cenocepacia (strain ATCC BAA-245 / DSM 16553 / LMG 16656 / NCTC 13227 / J2315 / CF5610) (Burkholderia cepacia (strain J2315)).